Reading from the N-terminus, the 168-residue chain is Protein-export protein SecB (168 aa).

Polar residues predominate over residues 1 to 10 (MSDQGTNNGE). The tract at residues 1 to 22 (MSDQGTNNGESGNGGAQNGEAP) is disordered.

Belongs to the SecB family. As to quaternary structure, homotetramer, a dimer of dimers. One homotetramer interacts with 1 SecA dimer.

The protein localises to the cytoplasm. Functionally, one of the proteins required for the normal export of preproteins out of the cell cytoplasm. It is a molecular chaperone that binds to a subset of precursor proteins, maintaining them in a translocation-competent state. It also specifically binds to its receptor SecA. This chain is Protein-export protein SecB, found in Parvibaculum lavamentivorans (strain DS-1 / DSM 13023 / NCIMB 13966).